Here is a 109-residue protein sequence, read N- to C-terminus: MLEAISSTAISAGQAASRATETQAIAPAAPTAIQSGGDVGFDSVMKQVTTDAIGTLKAGEAASISAMQGKESTRRVVEALMSAEQALQTAVAVRDKVVQAYQEVVRMSI.

This sequence belongs to the FliE family.

Its subcellular location is the bacterial flagellum basal body. The chain is Flagellar hook-basal body complex protein FliE 2 (fliE2) from Bradyrhizobium diazoefficiens (strain JCM 10833 / BCRC 13528 / IAM 13628 / NBRC 14792 / USDA 110).